Consider the following 234-residue polypeptide: Uridylate kinase (234 aa).

9–12 (KLSG) contributes to the ATP binding site. G51 provides a ligand contact to UMP. 2 residues coordinate ATP: G52 and R56. UMP contacts are provided by residues D71 and 132-139 (CGNPFFTT). T159, Y165, and D168 together coordinate ATP.

The protein belongs to the UMP kinase family. As to quaternary structure, homohexamer.

The protein localises to the cytoplasm. The enzyme catalyses UMP + ATP = UDP + ADP. It participates in pyrimidine metabolism; CTP biosynthesis via de novo pathway; UDP from UMP (UMPK route): step 1/1. Its activity is regulated as follows. Inhibited by UTP. Catalyzes the reversible phosphorylation of UMP to UDP. This chain is Uridylate kinase, found in Prochlorococcus marinus subsp. pastoris (strain CCMP1986 / NIES-2087 / MED4).